The primary structure comprises 83 residues: MASLKLWVCLVLLLVLELTSVHECRPLVAEERFSGSSRLKKIRRELFERLKEMKGRSEGEETILGNTLDSKRLSPGGPDPRHH.

A signal peptide spans 1–24 (MASLKLWVCLVLLLVLELTSVHEC). Residues 38-58 (RLKKIRRELFERLKEMKGRSE) adopt a coiled-coil conformation. A disordered region spans residues 53 to 83 (MKGRSEGEETILGNTLDSKRLSPGGPDPRHH). A hydroxyproline mark is found at Pro-75 and Pro-78. O-linked (Ara...) hydroxyproline glycosylation occurs at Pro-78.

The protein belongs to the CLV3/ESR signal peptide family. Post-translationally, the O-glycosylation (arabinosylation) of the hydroxyproline Pro-78 enhances binding affinity of the CLE3p peptide for its receptor. Mostly expressed in roots, stems and apex, and, to a lower extent, in seedlings, leaves, flowers, siliques and pollen.

It is found in the secreted. Its subcellular location is the extracellular space. Its function is as follows. Extracellular signal peptide that regulates cell fate. This chain is CLAVATA3/ESR (CLE)-related protein 3, found in Arabidopsis thaliana (Mouse-ear cress).